Here is a 421-residue protein sequence, read N- to C-terminus: Gamma-glutamyl phosphate reductase (421 aa).

It belongs to the gamma-glutamyl phosphate reductase family.

Its subcellular location is the cytoplasm. The enzyme catalyses L-glutamate 5-semialdehyde + phosphate + NADP(+) = L-glutamyl 5-phosphate + NADPH + H(+). It participates in amino-acid biosynthesis; L-proline biosynthesis; L-glutamate 5-semialdehyde from L-glutamate: step 2/2. Functionally, catalyzes the NADPH-dependent reduction of L-glutamate 5-phosphate into L-glutamate 5-semialdehyde and phosphate. The product spontaneously undergoes cyclization to form 1-pyrroline-5-carboxylate. This Brucella melitensis biotype 1 (strain ATCC 23456 / CCUG 17765 / NCTC 10094 / 16M) protein is Gamma-glutamyl phosphate reductase.